Here is a 298-residue protein sequence, read N- to C-terminus: Phosphatidylglycerol--prolipoprotein diacylglyceryl transferase (298 aa).

Helical transmembrane passes span 17–37 (LAVR…IVVG), 59–79 (MMFY…VLFY), 97–117 (GGMS…LFAW), 129–149 (FVAP…FING), 204–224 (SQLY…FLFA), 230–250 (MGAI…TVEF), and 257–277 (FLGL…PMIL). Arg-142 is a binding site for a 1,2-diacyl-sn-glycero-3-phospho-(1'-sn-glycerol).

This sequence belongs to the Lgt family.

The protein localises to the cell inner membrane. It carries out the reaction L-cysteinyl-[prolipoprotein] + a 1,2-diacyl-sn-glycero-3-phospho-(1'-sn-glycerol) = an S-1,2-diacyl-sn-glyceryl-L-cysteinyl-[prolipoprotein] + sn-glycerol 1-phosphate + H(+). It participates in protein modification; lipoprotein biosynthesis (diacylglyceryl transfer). Functionally, catalyzes the transfer of the diacylglyceryl group from phosphatidylglycerol to the sulfhydryl group of the N-terminal cysteine of a prolipoprotein, the first step in the formation of mature lipoproteins. The polypeptide is Phosphatidylglycerol--prolipoprotein diacylglyceryl transferase (Burkholderia orbicola (strain MC0-3)).